Here is a 155-residue protein sequence, read N- to C-terminus: MADLSSLKDLGTVSEAAAPAHVRKVDSLGRSYATGKRKNAVARVWVKPGSGKITVNGKEFAEYFARPVLQMILRQPIVAAARDGQFDIVATVAGGGLSGQAGAVRHGVSKALTYFEPGLRAVLKKGGFLTRDSRVVERKKYGKAKARRSFQFSKR.

Belongs to the universal ribosomal protein uS9 family.

In Rhizobium johnstonii (strain DSM 114642 / LMG 32736 / 3841) (Rhizobium leguminosarum bv. viciae), this protein is Small ribosomal subunit protein uS9.